Reading from the N-terminus, the 229-residue chain is uncharacterized protein (229 aa).

Positions 2 to 69 constitute an S4 RNA-binding domain; sequence QRLAKIISNA…KPRLWIYYKP (68 aa). The Nucleophile role is filled by Asp-102.

This sequence belongs to the pseudouridine synthase RsuA family.

The catalysed reaction is a uridine in RNA = a pseudouridine in RNA. This is an uncharacterized protein from Rickettsia felis (strain ATCC VR-1525 / URRWXCal2) (Rickettsia azadi).